The chain runs to 328 residues: Methionyl-tRNA formyltransferase (328 aa).

A (6S)-5,6,7,8-tetrahydrofolate-binding site is contributed by Ser-110–Pro-113.

It belongs to the Fmt family.

The enzyme catalyses L-methionyl-tRNA(fMet) + (6R)-10-formyltetrahydrofolate = N-formyl-L-methionyl-tRNA(fMet) + (6S)-5,6,7,8-tetrahydrofolate + H(+). Attaches a formyl group to the free amino group of methionyl-tRNA(fMet). The formyl group appears to play a dual role in the initiator identity of N-formylmethionyl-tRNA by promoting its recognition by IF2 and preventing the misappropriation of this tRNA by the elongation apparatus. The sequence is that of Methionyl-tRNA formyltransferase from Prochlorococcus marinus subsp. pastoris (strain CCMP1986 / NIES-2087 / MED4).